Consider the following 79-residue polypeptide: MSREVVVKVKVPSHYVGDIEREVKLAYAVDLFLRGIVSVERAAELAGMSLYDFLVELRRRRIQAYPYSDEELREELGIE.

Belongs to the UPF0175 family.

The chain is UPF0175 protein APE_0890a.1 from Aeropyrum pernix (strain ATCC 700893 / DSM 11879 / JCM 9820 / NBRC 100138 / K1).